The primary structure comprises 260 residues: Centromere protein K (260 aa).

Positions 84 to 173 form a coiled coil; it reads EEELQKVKKE…KKLMNALGEF (90 aa).

Belongs to the CENP-K/MCM22 family. Component of the CENPA-HI complex, at least composed of CENPH, CENPI, CENPK, CENPL, CENPM, CENPO and CENPP.

The protein localises to the nucleus. The protein resides in the chromosome. Its subcellular location is the centromere. It is found in the kinetochore. Its function is as follows. Component of the CENPA-HI complex, a centromeric complex involved in assembly of kinetochore proteins, mitotic progression and chromosome segregation. The protein is Centromere protein K (CENPK) of Gallus gallus (Chicken).